The following is a 473-amino-acid chain: ATP synthase subunit beta (473 aa).

An ATP-binding site is contributed by 153-160 (GGAGVGKT).

The protein belongs to the ATPase alpha/beta chains family. F-type ATPases have 2 components, CF(1) - the catalytic core - and CF(0) - the membrane proton channel. CF(1) has five subunits: alpha(3), beta(3), gamma(1), delta(1), epsilon(1). CF(0) has three main subunits: a(1), b(2) and c(9-12). The alpha and beta chains form an alternating ring which encloses part of the gamma chain. CF(1) is attached to CF(0) by a central stalk formed by the gamma and epsilon chains, while a peripheral stalk is formed by the delta and b chains.

Its subcellular location is the cell inner membrane. It catalyses the reaction ATP + H2O + 4 H(+)(in) = ADP + phosphate + 5 H(+)(out). Produces ATP from ADP in the presence of a proton gradient across the membrane. The catalytic sites are hosted primarily by the beta subunits. This is ATP synthase subunit beta from Rickettsia conorii (strain ATCC VR-613 / Malish 7).